Reading from the N-terminus, the 121-residue chain is MDLIRKIEAQNKKSEAFVFNVGDTVRVIYKIIEGSNERLQSFEGIIISFQNKGIGKTFLVRKISSGIGVEKIFPVYSPIIEKVEVLRRGKVRRAKLYYMRNRIGKAAMKIKERLNIKKVKH.

Belongs to the bacterial ribosomal protein bL19 family.

Its function is as follows. This protein is located at the 30S-50S ribosomal subunit interface and may play a role in the structure and function of the aminoacyl-tRNA binding site. The protein is Large ribosomal subunit protein bL19 of Borrelia garinii subsp. bavariensis (strain ATCC BAA-2496 / DSM 23469 / PBi) (Borreliella bavariensis).